Reading from the N-terminus, the 819-residue chain is Protein EFR3 homolog A (819 aa).

A phosphoserine mark is found at S360, S363, S420, and S692.

It belongs to the EFR3 family. Component of a phosphatidylinositol 4-kinase (PI4K) complex, composed of PI4KA, EFR3 (EFR3A or EFR3B), TTC7 (TTC7A or TTC7B) and HYCC (HYCC1 or HYCC2). Post-translationally, palmitoylated at its N-terminus, anchoring the protein to the plasma membrane. In terms of tissue distribution, widely expressed. Expressed in neurons of the superior olivary complex of the auditory brainstem. Also expressed at lower levels in the cochlear nucleus, the lateral leminiscal nuclei and the inferior collicus.

The protein resides in the cell membrane. It is found in the cytoplasm. It localises to the cytosol. In terms of biological role, component of a complex required to localize phosphatidylinositol 4-kinase (PI4K) to the plasma membrane. The complex acts as a regulator of phosphatidylinositol 4-phosphate (PtdIns(4)P) synthesis. In the complex, EFR3A probably acts as the membrane-anchoring component. Also involved in responsiveness to G-protein-coupled receptors; it is however unclear whether this role is direct or indirect. This is Protein EFR3 homolog A from Mus musculus (Mouse).